A 325-amino-acid chain; its full sequence is Probable 2-ketogluconate reductase (325 aa).

Residues 158–159 (RI), Thr-211, 238–240 (ISR), and Asp-264 contribute to the NAD(+) site. The active site involves Arg-240. Glu-269 is an active-site residue. The active-site Proton donor is the His-288. 288–291 (HIGS) provides a ligand contact to NAD(+).

This sequence belongs to the D-isomer specific 2-hydroxyacid dehydrogenase family.

It catalyses the reaction D-gluconate + NADP(+) = 2-dehydro-D-gluconate + NADPH + H(+). In Bacillus subtilis (strain 168), this protein is Probable 2-ketogluconate reductase (yvcT).